The following is a 507-amino-acid chain: Ribose import ATP-binding protein RbsA (507 aa).

ABC transporter domains lie at 7–242 and 253–497; these read LEMR…VGRP and IPLG…TGVT. An ATP-binding site is contributed by 39 to 46; sequence GENGAGKS.

Belongs to the ABC transporter superfamily. Ribose importer (TC 3.A.1.2.1) family. The complex is composed of an ATP-binding protein (RbsA), two transmembrane proteins (RbsC) and a solute-binding protein (RbsB).

It localises to the cell inner membrane. It catalyses the reaction D-ribose(out) + ATP + H2O = D-ribose(in) + ADP + phosphate + H(+). Part of the ABC transporter complex RbsABC involved in ribose import. Responsible for energy coupling to the transport system. The chain is Ribose import ATP-binding protein RbsA from Yersinia pestis bv. Antiqua (strain Antiqua).